Reading from the N-terminus, the 147-residue chain is uncharacterized protein (147 aa).

To B.subtilis XkdM.

This is an uncharacterized protein from Bacillus subtilis (strain 168).